The primary structure comprises 105 residues: Thioredoxin (105 aa).

One can recognise a Thioredoxin domain in the interval 1-105 (MANNVTDSSF…SLLDWINKSI (105 aa)). An intrachain disulfide couples C30 to C33.

It belongs to the thioredoxin family.

Component of the thioredoxin-thioredoxin reductase system. Participates in various redox reactions through the reversible oxidation of its active center dithiol to a disulfide and catalyzes dithiol-disulfide exchange reactions. In Rickettsia felis (strain ATCC VR-1525 / URRWXCal2) (Rickettsia azadi), this protein is Thioredoxin (trxA).